A 130-amino-acid chain; its full sequence is Sec-independent protein translocase protein TatB (130 aa).

Residues 1–21 traverse the membrane as a helical segment; sequence MFDIGFTELTLIFIIGLVVLG. Composition is skewed to basic and acidic residues over residues 57–67 and 111–130; these read QDMQERMEKQM and PSDK…RRHD. The disordered stretch occupies residues 57 to 130; sequence QDMQERMEKQ…NHDQDSRRHD (74 aa).

This sequence belongs to the TatB family. As to quaternary structure, the Tat system comprises two distinct complexes: a TatABC complex, containing multiple copies of TatA, TatB and TatC subunits, and a separate TatA complex, containing only TatA subunits. Substrates initially bind to the TatABC complex, which probably triggers association of the separate TatA complex to form the active translocon.

It is found in the cell inner membrane. In terms of biological role, part of the twin-arginine translocation (Tat) system that transports large folded proteins containing a characteristic twin-arginine motif in their signal peptide across membranes. Together with TatC, TatB is part of a receptor directly interacting with Tat signal peptides. TatB may form an oligomeric binding site that transiently accommodates folded Tat precursor proteins before their translocation. This chain is Sec-independent protein translocase protein TatB, found in Alcanivorax borkumensis (strain ATCC 700651 / DSM 11573 / NCIMB 13689 / SK2).